The sequence spans 244 residues: ATP-dependent Clp protease ATP-binding subunit CLPT4, chloroplastic (244 aa).

The transit peptide at 1–64 (MQALQASRLT…WRSSGRVITR (64 aa)) directs the protein to the chloroplast. Low complexity predominate over residues 30 to 48 (SRPISSGVSSSQELSSRSS). Disordered regions lie at residues 30-55 (SRPI…TKSW) and 220-244 (GRRY…VSFL).

Belongs to the ClpA/ClpB family.

It is found in the plastid. The protein localises to the chloroplast. Accessory protein regulating the assembly of the plastid Clp protease system. This chain is ATP-dependent Clp protease ATP-binding subunit CLPT4, chloroplastic, found in Chlamydomonas reinhardtii (Chlamydomonas smithii).